We begin with the raw amino-acid sequence, 184 residues long: Uroplakin-2 (184 aa).

Positions 1 to 25 are cleaved as a signal peptide; that stretch reads MAPLLPIRTLPLILILLALLSPGAA. Positions 26-84 are excised as a propeptide; the sequence is DFNISSLSGLLSPALTESLLVALPPCHLTGGNATLMVRRANDSKVVTSSFVVPPCRGRR. 3 N-linked (GlcNAc...) asparagine glycosylation sites follow: Asn28, Asn57, and Asn66. Over 85-155 the chain is Lumenal; sequence ELVSVVDSGA…IGLGMARTGG (71 aa). Residues 156–176 traverse the membrane as a helical segment; that stretch reads MVVITVLLSVAMFLLVLGFII. The Cytoplasmic portion of the chain corresponds to 177–184; sequence ALALGSRK.

This sequence belongs to the uroplakin-2 family. As to quaternary structure, interacts with uroplakin-1a (UPK1A). As to expression, expressed in ureter.

It localises to the cell membrane. Component of the asymmetric unit membrane (AUM); a highly specialized biomembrane elaborated by terminally differentiated urothelial cells. May play an important role in regulating the assembly of the AUM. This Homo sapiens (Human) protein is Uroplakin-2 (UPK2).